A 137-amino-acid chain; its full sequence is Nucleoside diphosphate kinase (137 aa).

Residues K10, F58, R86, T92, R103, and N113 each contribute to the ATP site. H116 functions as the Pros-phosphohistidine intermediate in the catalytic mechanism.

Belongs to the NDK family. As to quaternary structure, homotetramer. It depends on Mg(2+) as a cofactor.

It is found in the cytoplasm. It carries out the reaction a 2'-deoxyribonucleoside 5'-diphosphate + ATP = a 2'-deoxyribonucleoside 5'-triphosphate + ADP. The catalysed reaction is a ribonucleoside 5'-diphosphate + ATP = a ribonucleoside 5'-triphosphate + ADP. In terms of biological role, major role in the synthesis of nucleoside triphosphates other than ATP. The ATP gamma phosphate is transferred to the NDP beta phosphate via a ping-pong mechanism, using a phosphorylated active-site intermediate. In Helicobacter pylori (strain G27), this protein is Nucleoside diphosphate kinase.